Here is a 309-residue protein sequence, read N- to C-terminus: Metal ABC transporter substrate-binding lipoprotein SsaB (309 aa).

The signal sequence occupies residues 1–19 (MKKLGFLSLLLLAVCTLFA). Residue C20 is the site of N-palmitoyl cysteine attachment. The S-diacylglycerol cysteine moiety is linked to residue C20. Positions 67, 139, 205, and 280 each coordinate a divalent metal cation.

It belongs to the bacterial solute-binding protein 9 family. Lipoprotein receptor antigen (Lrai) subfamily. As to quaternary structure, homodimer and homotrimer.

Its subcellular location is the cell membrane. Its function is as follows. Part of an ATP-binding cassette (ABC) transport system involved in metal import. Binds a metal with high affinity and specificity and delivers it to the membrane permease for translocation into the cytoplasm. Also acts as an adhesin which is involved on adherence to extracellular matrix. It is an important factor in the pathogenesis and infection. May contribute to the formation and accumulation of dental plaque. The polypeptide is Metal ABC transporter substrate-binding lipoprotein SsaB (ssaB) (Streptococcus sanguinis).